Reading from the N-terminus, the 488-residue chain is Cruciferin (488 aa).

The first 23 residues, 1 to 23 (MARLSSLLSFSLALLTFLHGSTA), serve as a signal peptide directing secretion. 2 disulfide bridges follow: Cys30–Cys63 and Cys105–Cys305. 2 consecutive Cupin type-1 domains span residues 35 to 262 (LNAL…RTAQ) and 311 to 460 (DNLD…EEAR). The segment at 116–163 (QPSGGSPFGEGQGQGQQGQGQGHQGQGQGQQGQQGQQGQQSQGQGFRD) is disordered. Residues 121–147 (SPFGEGQGQGQQGQGQGHQGQGQGQQG) are compositionally biased toward gly residues. Over residues 148-160 (QQGQQGQQSQGQG) the composition is skewed to low complexity.

This sequence belongs to the 11S seed storage protein (globulins) family. Hexamer; each subunit is composed of an acidic and a basic chain derived from a single precursor and linked by a disulfide bond.

Its subcellular location is the rough endoplasmic reticulum. Its function is as follows. This is a seed storage protein. This is Cruciferin (CRUA) from Brassica napus (Rape).